A 469-amino-acid polypeptide reads, in one-letter code: Adenosylhomocysteinase (469 aa).

Substrate contacts are provided by Thr-63, Asp-139, and Glu-164. 165-167 (TTT) contacts NAD(+). Substrate is bound by residues Lys-194 and Asp-198. Residues Asn-199, 228 to 233 (GYGDVG), Glu-251, Asn-300, 321 to 323 (IGH), and Asn-375 contribute to the NAD(+) site.

It belongs to the adenosylhomocysteinase family. The cofactor is NAD(+).

Its subcellular location is the cytoplasm. The catalysed reaction is S-adenosyl-L-homocysteine + H2O = L-homocysteine + adenosine. Its pathway is amino-acid biosynthesis; L-homocysteine biosynthesis; L-homocysteine from S-adenosyl-L-homocysteine: step 1/1. Its function is as follows. May play a key role in the regulation of the intracellular concentration of adenosylhomocysteine. The sequence is that of Adenosylhomocysteinase from Pseudomonas fluorescens (strain SBW25).